A 397-amino-acid polypeptide reads, in one-letter code: N-acetyllactosaminide beta-1,3-N-acetylglucosaminyltransferase 2 (397 aa).

At 1-7 the chain is on the cytoplasmic side; the sequence is MSVGRRR. Residues 8–28 form a helical; Signal-anchor for type II membrane protein membrane-spanning segment; that stretch reads VKLLGILMMANVFIYLIVEVS. The Lumenal portion of the chain corresponds to 29–325; sequence KNSSQDKNGK…ALRLYSATSR (297 aa). Residues Asn30, Asn79, Asn89, Asn127, Asn173, and Asn219 are each glycosylated (N-linked (GlcNAc...) asparagine).

It belongs to the glycosyltransferase 31 family. Interacts with B3GNT8; this interaction greatly increases B3GNT2 catalytic activity, independently of B3GNT8 enzymatic activity. Mn(2+) serves as cofactor. Expressed in heart, brain, lung, kidney and testis and, to a lesser extent, in liver and skeletal muscle. No expression in spleen.

It is found in the golgi apparatus membrane. It catalyses the reaction a beta-D-galactosyl-(1-&gt;4)-N-acetyl-beta-D-glucosaminyl derivative + UDP-N-acetyl-alpha-D-glucosamine = an N-acetyl-beta-D-glucosaminyl-(1-&gt;3)-beta-D-galactosyl-(1-&gt;4)-N-acetyl-beta-D-glucosaminyl derivative + UDP + H(+). The protein operates within protein modification; protein glycosylation. Its function is as follows. Beta-1,3-N-acetylglucosaminyltransferase involved in the synthesis of poly-N-acetyllactosamine. Catalyzes the initiation and elongation of poly-N-acetyllactosamine chains. Probably constitutes the main polylactosamine synthase. The polypeptide is N-acetyllactosaminide beta-1,3-N-acetylglucosaminyltransferase 2 (B3GNT2) (Mus musculus (Mouse)).